The sequence spans 240 residues: Cysteine-rich venom protein (240 aa).

Positions 1 to 19 (MIAFIVLPILAAVLQQSSG) are cleaved as a signal peptide. Residues 39–166 (DLHNSLRRSV…EYSYFYVCQY (128 aa)) enclose the SCP domain. Disulfide bonds link C75-C153, C92-C167, C148-C164, C186-C193, C189-C198, C202-C235, C211-C229, and C220-C233. The 34-residue stretch at 202-235 (CRQENKFTNCDSLVRQSSCQDNYMKTNCPASCFC) folds into the ShKT domain.

It belongs to the CRISP family. In terms of tissue distribution, expressed by the venom gland.

It localises to the secreted. Its function is as follows. Blocks contraction of smooth muscle elicited by high potassium-induced depolarization, but does not block caffeine-stimulated contraction. May target voltage-gated calcium channels on smooth muscle. This Protobothrops jerdonii (Jerdon's pitviper) protein is Cysteine-rich venom protein.